Reading from the N-terminus, the 282-residue chain is Probable protein phosphatase 2C 45 (282 aa).

Residues 27 to 272 (SYGYASSPGK…DNITCVVVRF (246 aa)) form the PPM-type phosphatase domain. Residues Asp63, Gly64, Asp224, and Asp263 each coordinate Mn(2+).

This sequence belongs to the PP2C family. Requires Mg(2+) as cofactor. The cofactor is Mn(2+).

The catalysed reaction is O-phospho-L-seryl-[protein] + H2O = L-seryl-[protein] + phosphate. The enzyme catalyses O-phospho-L-threonyl-[protein] + H2O = L-threonyl-[protein] + phosphate. The chain is Probable protein phosphatase 2C 45 from Oryza sativa subsp. japonica (Rice).